The chain runs to 634 residues: Chaperone protein HtpG (634 aa).

An a; substrate-binding region spans residues 1 to 344 (MSETVSHNKE…SNDLPLNVSR (344 aa)). The tract at residues 345 to 561 (EILQDNKVTQ…DFEMGTQMAK (217 aa)) is b. Positions 562-634 (LLEAAGQAVP…GAINKLLTKV (73 aa)) are c.

It belongs to the heat shock protein 90 family. Homodimer.

Its subcellular location is the cytoplasm. In terms of biological role, molecular chaperone. Has ATPase activity. This is Chaperone protein HtpG from Vibrio campbellii (strain ATCC BAA-1116).